Consider the following 481-residue polypeptide: Sulfate adenylyltransferase subunit 1 (481 aa).

The tr-type G domain occupies 22–236; it reads KDLLRFITCG…LLDSIRLDAD (215 aa). Residues 31–38 form a G1 region; it reads GSVDDGKS. Position 31–38 (31–38) interacts with GTP; the sequence is GSVDDGKS. Residues 89–93 form a G2 region; sequence GITID. Residues 110 to 113 form a G3 region; it reads DCPG. Residues 110 to 114 and 165 to 168 contribute to the GTP site; these read DCPGH and NKMD. Residues 165-168 are G4; sequence NKMD. Residues 202–204 form a G5 region; the sequence is SAL.

Belongs to the TRAFAC class translation factor GTPase superfamily. Classic translation factor GTPase family. CysN/NodQ subfamily. In terms of assembly, heterodimer composed of CysD, the smaller subunit, and CysN.

The enzyme catalyses sulfate + ATP + H(+) = adenosine 5'-phosphosulfate + diphosphate. The protein operates within sulfur metabolism; hydrogen sulfide biosynthesis; sulfite from sulfate: step 1/3. With CysD forms the ATP sulfurylase (ATPS) that catalyzes the adenylation of sulfate producing adenosine 5'-phosphosulfate (APS) and diphosphate, the first enzymatic step in sulfur assimilation pathway. APS synthesis involves the formation of a high-energy phosphoric-sulfuric acid anhydride bond driven by GTP hydrolysis by CysN coupled to ATP hydrolysis by CysD. The sequence is that of Sulfate adenylyltransferase subunit 1 from Laribacter hongkongensis (strain HLHK9).